The following is a 706-amino-acid chain: Elongation factor G (706 aa).

Positions 8 to 297 constitute a tr-type G domain; sequence ERVRNIGIAA…AVIDYLPAPT (290 aa). Residues 17–24, 96–100, and 150–153 contribute to the GTP site; these read AHIDAGKT, DTPGH, and NKMD.

It belongs to the TRAFAC class translation factor GTPase superfamily. Classic translation factor GTPase family. EF-G/EF-2 subfamily.

The protein localises to the cytoplasm. In terms of biological role, catalyzes the GTP-dependent ribosomal translocation step during translation elongation. During this step, the ribosome changes from the pre-translocational (PRE) to the post-translocational (POST) state as the newly formed A-site-bound peptidyl-tRNA and P-site-bound deacylated tRNA move to the P and E sites, respectively. Catalyzes the coordinated movement of the two tRNA molecules, the mRNA and conformational changes in the ribosome. The sequence is that of Elongation factor G from Cyanothece sp. (strain PCC 7425 / ATCC 29141).